A 110-amino-acid polypeptide reads, in one-letter code: UPF0060 membrane protein Rpal_4363 (110 aa).

Transmembrane regions (helical) follow at residues 4–24 (LLTF…FWAW), 31–51 (PLWL…LTLA), 59–79 (AYAA…WAIE), and 88–108 (VIGA…PRAL).

Belongs to the UPF0060 family.

Its subcellular location is the cell inner membrane. This is UPF0060 membrane protein Rpal_4363 from Rhodopseudomonas palustris (strain TIE-1).